A 128-amino-acid chain; its full sequence is Lymphocyte antigen 6D (128 aa).

The first 20 residues, 1–20 (MRTALLLLAALAVATGPALT), serve as a signal peptide directing secretion. In terms of domain architecture, UPAR/Ly6 spans 21–108 (LRCHVCTSSS…AAPTRTALAH (88 aa)). Intrachain disulfides connect Cys23–Cys45, Cys26–Cys32, Cys38–Cys63, Cys67–Cys86, and Cys87–Cys92. Asn98 carries the GPI-anchor amidated asparagine lipid modification. Residues 99-128 (AAPTRTALAHSALSLGLALSLLAVILAPSL) constitute a propeptide, removed in mature form.

In terms of tissue distribution, expressed exclusively at the outer cell surface of transitional epithelia and the keratinocyte of stratified squamous epithelia.

The protein resides in the cell membrane. May act as a specification marker at earliest stage specification of lymphocytes between B- and T-cell development. Marks the earliest stage of B-cell specification. The protein is Lymphocyte antigen 6D (LY6D) of Homo sapiens (Human).